We begin with the raw amino-acid sequence, 69 residues long: Ferredoxin-1 (69 aa).

3 residues coordinate [3Fe-4S] cluster: Cys-12, Cys-18, and Cys-57.

Requires [3Fe-4S] cluster as cofactor.

In terms of biological role, electron transport protein for the cytochrome P-450-SU1 system. This is Ferredoxin-1 (suaB) from Streptomyces griseolus.